Consider the following 79-residue polypeptide: Small ribosomal subunit protein bS16 (79 aa).

It belongs to the bacterial ribosomal protein bS16 family.

The sequence is that of Small ribosomal subunit protein bS16 from Nitratidesulfovibrio vulgaris (strain DSM 19637 / Miyazaki F) (Desulfovibrio vulgaris).